Reading from the N-terminus, the 763-residue chain is Dual specificity tyrosine-phosphorylation-regulated kinase 1A (763 aa).

A Phosphoserine modification is found at Ser14. Residues 32-57 (GQMPHSHQYSDRRQPNISDQQVSALS) form a disordered region. The segment covering 46-57 (PNISDQQVSALS) has biased composition (polar residues). The residue at position 111 (Tyr111) is a Phosphotyrosine; by autocatalysis. The segment at 115–136 (KKRRHQQGQGDDSSHKKERKVY) is disordered. A Bipartite nuclear localization signal motif is present at residues 117 to 134 (RRHQQGQGDDSSHKKERK). Position 140 is a phosphotyrosine; by autocatalysis (Tyr140). Position 145 is a phosphotyrosine (Tyr145). Phosphotyrosine; by autocatalysis is present on Tyr159. A Protein kinase domain is found at 159–479 (YEIDSLIGKG…PYYALQHSFF (321 aa)). 165-173 (IGKGSFGQV) provides a ligand contact to ATP. Tyr177 carries the phosphotyrosine; by autocatalysis modification. Residue Lys188 coordinates ATP. The residue at position 219 (Tyr219) is a Phosphotyrosine; by autocatalysis. Residue 238–241 (FEML) participates in ATP binding. Asp287 (proton acceptor) is an active-site residue. Ser310 carries the phosphoserine; by autocatalysis modification. Phosphotyrosine; by autocatalysis is present on residues Tyr319 and Tyr321. Thr402 carries the post-translational modification Phosphothreonine; by autocatalysis. Residues 408-442 (TKDGKREYKPPGTRKLHNILGVETGGPGGRRAGES) are disordered. Tyr449 is modified (phosphotyrosine; by autocatalysis). Positions 485–501 (EGTNTSNSVSTSPAMEQ) are enriched in polar residues. Disordered regions lie at residues 485–540 (EGTN…HSGG), 596–679 (NALH…GNQA), and 744–763 (DREESPMTGVCVQQSPVASS). Over residues 502–525 (SQSSGTTSSTSSSSGGSSGTSNSG) the composition is skewed to low complexity. Phosphoserine is present on residues Ser529 and Ser538. The histidine-rich domain (HRD) stretch occupies residues 595–625 (QNALHHHHGNSSHHHHHHHHHHHHHGQQALG). A compositionally biased stretch (basic residues) spans 598-620 (LHHHHGNSSHHHHHHHHHHHHHG). The span at 634 to 645 (NSPTNSSSTQDS) shows a compositional bias: polar residues. A compositionally biased stretch (low complexity) spans 654 to 672 (SMTSLSSSTTSSSTSSSST). Phosphoserine occurs at positions 748 and 758. A compositionally biased stretch (polar residues) spans 754-763 (CVQQSPVASS).

The protein belongs to the protein kinase superfamily. CMGC Ser/Thr protein kinase family. MNB/DYRK subfamily. As to quaternary structure, interacts with RAD54L2/ARIP4. Interacts with CRY2. Interacts with RANBP9. Interacts with WDR68. Interacts with SIRT1. In terms of assembly, (Microbial infection) Interacts with human adenovirus 5 E1A protein. Autophosphorylated on numerous tyrosine residues. Can also autophosphorylate on serine and threonine residues (in vitro). Ubiquitous. Highest levels in skeletal muscle, testis, fetal lung and fetal kidney.

It is found in the nucleus. The protein resides in the nucleus speckle. It catalyses the reaction L-seryl-[protein] + ATP = O-phospho-L-seryl-[protein] + ADP + H(+). It carries out the reaction L-threonyl-[protein] + ATP = O-phospho-L-threonyl-[protein] + ADP + H(+). The catalysed reaction is L-tyrosyl-[protein] + ATP = O-phospho-L-tyrosyl-[protein] + ADP + H(+). The enzyme catalyses [DNA-directed RNA polymerase] + ATP = phospho-[DNA-directed RNA polymerase] + ADP + H(+). Inhibited by RANBP9. Inhibited by harmine, leucettamine B and leucettine L41. Dual-specificity kinase which possesses both serine/threonine and tyrosine kinase activities. Exhibits a substrate preference for proline at position P+1 and arginine at position P-3. Plays an important role in double-strand breaks (DSBs) repair following DNA damage. Mechanistically, phosphorylates RNF169 and increases its ability to block accumulation of TP53BP1 at the DSB sites thereby promoting homologous recombination repair (HRR). Also acts as a positive regulator of transcription by acting as a CTD kinase that mediates phosphorylation of the CTD (C-terminal domain) of the large subunit of RNA polymerase II (RNAP II) POLR2A. May play a role in a signaling pathway regulating nuclear functions of cell proliferation. Modulates alternative splicing by phosphorylating the splice factor SRSF6. Has pro-survival function and negatively regulates the apoptotic process. Promotes cell survival upon genotoxic stress through phosphorylation of SIRT1. This in turn inhibits p53/TP53 activity and apoptosis. Phosphorylates SEPTIN4, SEPTIN5 and SF3B1 at 'Thr-434'. This chain is Dual specificity tyrosine-phosphorylation-regulated kinase 1A, found in Homo sapiens (Human).